The primary structure comprises 365 residues: Histidinol-phosphate aminotransferase (365 aa).

The disordered stretch occupies residues 1 to 23 (MSRPVPNPGILDIAPYTPGKSPV). The residue at position 221 (K221) is an N6-(pyridoxal phosphate)lysine.

It belongs to the class-II pyridoxal-phosphate-dependent aminotransferase family. Histidinol-phosphate aminotransferase subfamily. As to quaternary structure, homodimer. Pyridoxal 5'-phosphate serves as cofactor.

It catalyses the reaction L-histidinol phosphate + 2-oxoglutarate = 3-(imidazol-4-yl)-2-oxopropyl phosphate + L-glutamate. It functions in the pathway amino-acid biosynthesis; L-histidine biosynthesis; L-histidine from 5-phospho-alpha-D-ribose 1-diphosphate: step 7/9. This chain is Histidinol-phosphate aminotransferase, found in Rhodopseudomonas palustris (strain BisB18).